We begin with the raw amino-acid sequence, 343 residues long: Holliday junction branch migration complex subunit RuvB (343 aa).

The tract at residues Met-1–Tyr-178 is large ATPase domain (RuvB-L). ATP contacts are provided by residues Leu-17, Arg-18, Gly-59, Lys-62, Thr-63, Thr-64, Glu-125–Tyr-127, Arg-168, Tyr-178, and Arg-215. Thr-63 provides a ligand contact to Mg(2+). The interval Thr-179–Glu-249 is small ATPAse domain (RuvB-S). The segment at Lys-252–Ser-343 is head domain (RuvB-H). Positions 307 and 312 each coordinate DNA.

It belongs to the RuvB family. In terms of assembly, homohexamer. Forms an RuvA(8)-RuvB(12)-Holliday junction (HJ) complex. HJ DNA is sandwiched between 2 RuvA tetramers; dsDNA enters through RuvA and exits via RuvB. An RuvB hexamer assembles on each DNA strand where it exits the tetramer. Each RuvB hexamer is contacted by two RuvA subunits (via domain III) on 2 adjacent RuvB subunits; this complex drives branch migration. In the full resolvosome a probable DNA-RuvA(4)-RuvB(12)-RuvC(2) complex forms which resolves the HJ.

The protein localises to the cytoplasm. The enzyme catalyses ATP + H2O = ADP + phosphate + H(+). In terms of biological role, the RuvA-RuvB-RuvC complex processes Holliday junction (HJ) DNA during genetic recombination and DNA repair, while the RuvA-RuvB complex plays an important role in the rescue of blocked DNA replication forks via replication fork reversal (RFR). RuvA specifically binds to HJ cruciform DNA, conferring on it an open structure. The RuvB hexamer acts as an ATP-dependent pump, pulling dsDNA into and through the RuvAB complex. RuvB forms 2 homohexamers on either side of HJ DNA bound by 1 or 2 RuvA tetramers; 4 subunits per hexamer contact DNA at a time. Coordinated motions by a converter formed by DNA-disengaged RuvB subunits stimulates ATP hydrolysis and nucleotide exchange. Immobilization of the converter enables RuvB to convert the ATP-contained energy into a lever motion, pulling 2 nucleotides of DNA out of the RuvA tetramer per ATP hydrolyzed, thus driving DNA branch migration. The RuvB motors rotate together with the DNA substrate, which together with the progressing nucleotide cycle form the mechanistic basis for DNA recombination by continuous HJ branch migration. Branch migration allows RuvC to scan DNA until it finds its consensus sequence, where it cleaves and resolves cruciform DNA. The chain is Holliday junction branch migration complex subunit RuvB from Pseudothermotoga lettingae (strain ATCC BAA-301 / DSM 14385 / NBRC 107922 / TMO) (Thermotoga lettingae).